A 279-amino-acid polypeptide reads, in one-letter code: 4-hydroxy-3-methylbut-2-enyl diphosphate reductase (279 aa).

C12 contacts [4Fe-4S] cluster. (2E)-4-hydroxy-3-methylbut-2-enyl diphosphate-binding residues include H42 and H74. H42 and H74 together coordinate dimethylallyl diphosphate. Isopentenyl diphosphate is bound by residues H42 and H74. [4Fe-4S] cluster is bound at residue C96. (2E)-4-hydroxy-3-methylbut-2-enyl diphosphate is bound at residue H124. Residue H124 coordinates dimethylallyl diphosphate. H124 is an isopentenyl diphosphate binding site. E126 functions as the Proton donor in the catalytic mechanism. T162 lines the (2E)-4-hydroxy-3-methylbut-2-enyl diphosphate pocket. C190 is a [4Fe-4S] cluster binding site. Residues S218, S219, N220, and S263 each coordinate (2E)-4-hydroxy-3-methylbut-2-enyl diphosphate. 4 residues coordinate dimethylallyl diphosphate: S218, S219, N220, and S263. Isopentenyl diphosphate is bound by residues S218, S219, N220, and S263.

It belongs to the IspH family. Requires [4Fe-4S] cluster as cofactor.

The catalysed reaction is isopentenyl diphosphate + 2 oxidized [2Fe-2S]-[ferredoxin] + H2O = (2E)-4-hydroxy-3-methylbut-2-enyl diphosphate + 2 reduced [2Fe-2S]-[ferredoxin] + 2 H(+). The enzyme catalyses dimethylallyl diphosphate + 2 oxidized [2Fe-2S]-[ferredoxin] + H2O = (2E)-4-hydroxy-3-methylbut-2-enyl diphosphate + 2 reduced [2Fe-2S]-[ferredoxin] + 2 H(+). It functions in the pathway isoprenoid biosynthesis; dimethylallyl diphosphate biosynthesis; dimethylallyl diphosphate from (2E)-4-hydroxy-3-methylbutenyl diphosphate: step 1/1. It participates in isoprenoid biosynthesis; isopentenyl diphosphate biosynthesis via DXP pathway; isopentenyl diphosphate from 1-deoxy-D-xylulose 5-phosphate: step 6/6. Its function is as follows. Catalyzes the conversion of 1-hydroxy-2-methyl-2-(E)-butenyl 4-diphosphate (HMBPP) into a mixture of isopentenyl diphosphate (IPP) and dimethylallyl diphosphate (DMAPP). Acts in the terminal step of the DOXP/MEP pathway for isoprenoid precursor biosynthesis. The protein is 4-hydroxy-3-methylbut-2-enyl diphosphate reductase of Alkaliphilus oremlandii (strain OhILAs) (Clostridium oremlandii (strain OhILAs)).